Consider the following 415-residue polypeptide: Protein fuzzy homolog (415 aa).

It belongs to the fuzzy family. Component of the CPLANE (ciliogenesis and planar polarity effectors) complex, composed of INTU, FUZ and WDPCP. Interacts with CPLANE1 and CPLANE2.

The protein resides in the cytoplasm. It localises to the cytoskeleton. The protein localises to the cilium basal body. Functionally, probable planar cell polarity effector involved in cilium biogenesis. Proposed to function as core component of the CPLANE (ciliogenesis and planar polarity effectors) complex involved in the recruitment of peripheral IFT-A proteins to basal bodies. May regulate protein and membrane transport to the cilium. May regulate the morphogenesis of hair follicles which depends on functional primary cilia. Binds phosphatidylinositol 3-phosphate with highest affinity, followed by phosphatidylinositol 4-phosphate and phosphatidylinositol 5-phosphate. This is Protein fuzzy homolog (Fuz) from Rattus norvegicus (Rat).